Reading from the N-terminus, the 160-residue chain is Cytochrome b6-f complex subunit 4 (160 aa).

The next 3 helical transmembrane spans lie at 36 to 56 (LLYIFPVVILGTIACNVGLAV), 95 to 115 (LLGVLLMVSVPAGLLTVPFLE), and 131 to 151 (TVFLIGTAAALWLGIGATLPI).

It belongs to the cytochrome b family. PetD subfamily. The 4 large subunits of the cytochrome b6-f complex are cytochrome b6, subunit IV (17 kDa polypeptide, petD), cytochrome f and the Rieske protein, while the 4 small subunits are petG, petL, petM and petN. The complex functions as a dimer.

The protein localises to the plastid. It localises to the chloroplast thylakoid membrane. Functionally, component of the cytochrome b6-f complex, which mediates electron transfer between photosystem II (PSII) and photosystem I (PSI), cyclic electron flow around PSI, and state transitions. The chain is Cytochrome b6-f complex subunit 4 from Arabidopsis thaliana (Mouse-ear cress).